The sequence spans 1202 residues: DNA polymerase beta (1202 aa).

3 tandem repeats follow at residues 1071-1074, 1075-1078, and 1079-1082. The 3 X 4 AA tandem repeats of A-G-[NK]-[PA] stretch occupies residues 1071-1082; sequence AGNPAGNPAGNA.

Belongs to the DNA polymerase type-B family.

The catalysed reaction is DNA(n) + a 2'-deoxyribonucleoside 5'-triphosphate = DNA(n+1) + diphosphate. In terms of biological role, DNA-directed DNA polymerase involved in viral DNA replication. This chain is DNA polymerase beta (DPOL), found in Ornithodoros (relapsing fever ticks).